We begin with the raw amino-acid sequence, 534 residues long: Melanopsin-B (534 aa).

Residues 1-32 (MDLGKTVEYGTHRQDAIAQIDVPDQVLYTIGS) lie on the Extracellular side of the membrane. The chain crosses the membrane as a helical span at residues 33–53 (FILIIGSVGIIGNMLVLYAFY). Residues 54–64 (RNKKLRTAPNY) lie on the Cytoplasmic side of the membrane. A helical transmembrane segment spans residues 65–85 (FIINLAISDFLMSATQAPVCF). At 86-102 (LSSLHREWILGDIGCNV) the chain is on the extracellular side. Cys-100 and Cys-178 form a disulfide bridge. The chain crosses the membrane as a helical span at residues 103-123 (YAFCGALFGITSMMTLLAISI). Over 124-146 (NRYIVITKPLQSIQWSSKKRTSQ) the chain is Cytoplasmic. The chain crosses the membrane as a helical span at residues 147–167 (IIVLVWMYSLMWSLAPLLGWS). The Extracellular portion of the chain corresponds to 168–198 (SYVPEGLRISCTWDYVTSTMSNRSYTMMLCC). N-linked (GlcNAc...) asparagine glycosylation is present at Asn-189. Residues 199 to 219 (CVFFIPLIVISHCYLFMFLAI) form a helical membrane-spanning segment. Residues 220-250 (RSTGRNVQKLGSYGRQSFLSQSMKNEWKMAK) lie on the Cytoplasmic side of the membrane. A helical membrane pass occupies residues 251 to 271 (IAFVIIIVFVLSWSPYACVTL). At 272-286 (IAWAGHGKSLTPYSK) the chain is on the extracellular side. Residues 287–307 (TVPAVIAKASAIYNPIIYGII) traverse the membrane as a helical segment. An N6-(retinylidene)lysine modification is found at Lys-294. Over 308-534 (HPKYRETIHK…LYEVVERFLS (227 aa)) the chain is Cytoplasmic. Residues 478-501 (SNISETKEEHDNNSEEKSKRTEEE) form a disordered region. A compositionally biased stretch (basic and acidic residues) spans 482–499 (ETKEEHDNNSEEKSKRTE).

It belongs to the G-protein coupled receptor 1 family. Opsin subfamily. As to expression, highest level in the iris, high level in the inner nuclear layer, possibly in horizontal cells, and lowest level in retinal pigment epithelium. Expressed in melanophore cells of the skin.

It localises to the cell membrane. Its function is as follows. Photoreceptor implicated in non-image-forming responses to light. May be able to isomerize covalently bound all-trans retinal back to 11-cis retinal. This is Melanopsin-B from Xenopus laevis (African clawed frog).